We begin with the raw amino-acid sequence, 201 residues long: Large ribosomal subunit protein uL4 (201 aa).

Positions 45-73 (AQKTRAEVTGSGKKPWRQKGTGRARAGSV) are disordered.

Belongs to the universal ribosomal protein uL4 family. As to quaternary structure, part of the 50S ribosomal subunit.

One of the primary rRNA binding proteins, this protein initially binds near the 5'-end of the 23S rRNA. It is important during the early stages of 50S assembly. It makes multiple contacts with different domains of the 23S rRNA in the assembled 50S subunit and ribosome. In terms of biological role, forms part of the polypeptide exit tunnel. In Yersinia pseudotuberculosis serotype O:1b (strain IP 31758), this protein is Large ribosomal subunit protein uL4.